Reading from the N-terminus, the 445-residue chain is MGAVSGKTFYIETFGCQMNAHDSEKVVGTLLAEGYEQVATPEAAELVFYNTCSIRDKAEQKVFNRLQNFKREGMKGKIFGVLGCVAQQEGEKIFDRAPHVSLVAGSASYTRLPEMLVQLEAGNRRVTGLSLDTEETFDTPFTRRDNPHRAYLTIIEGCDKACAYCVVPFTRGPERSRTSESVMAEARGLTEKGYTEVQLLGQNVNSYRDPSPAGWDFATLLAKVAEIPGMRRVRYTTSHPRDFVRPIVDAMDANEAICDHIHLPVQSGSSKVLAAMDRLYTRDEYLRRIDWIKSAKRRYSLTTDIIIGFPGETDADFEQTLDLLDEVQYDSLFSFKYSPRPNTSALAMEDRIPEEEKQRRLLTLQEKQRAIQIRRNAEMIGSIQEVLVEGRNQALGQWIGRTTCNRTLNFSHPDTNGNELVGKYLPVRVTRSGPNSLVGESAALV.

The 115-residue stretch at 7–121 folds into the MTTase N-terminal domain; sequence KTFYIETFGC…LPEMLVQLEA (115 aa). The [4Fe-4S] cluster site is built by cysteine 16, cysteine 52, cysteine 84, cysteine 158, cysteine 162, and cysteine 165. In terms of domain architecture, Radical SAM core spans 144–374; that stretch reads RDNPHRAYLT…QEKQRAIQIR (231 aa). Residues 377-443 enclose the TRAM domain; sequence AEMIGSIQEV…PNSLVGESAA (67 aa).

This sequence belongs to the methylthiotransferase family. MiaB subfamily. As to quaternary structure, monomer. The cofactor is [4Fe-4S] cluster.

It localises to the cytoplasm. It catalyses the reaction N(6)-dimethylallyladenosine(37) in tRNA + (sulfur carrier)-SH + AH2 + 2 S-adenosyl-L-methionine = 2-methylsulfanyl-N(6)-dimethylallyladenosine(37) in tRNA + (sulfur carrier)-H + 5'-deoxyadenosine + L-methionine + A + S-adenosyl-L-homocysteine + 2 H(+). Functionally, catalyzes the methylthiolation of N6-(dimethylallyl)adenosine (i(6)A), leading to the formation of 2-methylthio-N6-(dimethylallyl)adenosine (ms(2)i(6)A) at position 37 in tRNAs that read codons beginning with uridine. This chain is tRNA-2-methylthio-N(6)-dimethylallyladenosine synthase, found in Solibacter usitatus (strain Ellin6076).